We begin with the raw amino-acid sequence, 752 residues long: MAAKTARSKATPTKENGVRVEEGLSLFKSDKFDADAYVQSKCSINEKDIKQLCSYLLDLKRASAEEMRRSVYANYPAFIRTSKEISDLEGELSSIRNLLSTQATLIHGLADGVNIDDDKVSDESLANGLLNFEDNGLSDLEKWATEFPDHLDALLAERRVDEALAAFDEGEILVSQANEKHTLSSSVLSSLQFAIAERKQKLADQLAKAACQPSTRGGELRSAIAALKRLGDGPRAHTVLLDAHFQRYQYNMQSLRPSSTSYGGAYTAALSQLVFSAISQASSDSLGIFGKEPAYSSELVTWATKQTEAFSLLVKRHALASSAAAGGLRAAAECAQIALGHCSLLEARGLSLCPVLLKHFKPIVEQALEANLKRIEENTAAMAAADDWVLTSPPAGSRHASTAFQNKLTSSAHRFNLMVQDFFEDVGPLLSMQLGSKALEGLFRVFNSYVDVLVRALPGSIEEEDPNFESSCNKIVQMAETEANQLALLANASLLADELLPRAAMKLSLDQTGQRTDDLRRPLDRQNRNPEQREWKRRLLSTVDKLKDAFCRQHALDLIFTEEGDSHLSADMYVNIDENGEDVDFFPSLIFQELFAKLNRMASLAADMFVGRERFAISLLMRLTETVILWLSGDQSFWDDIEEGPRPLGPLGLRQLYLDMKFVICFASQGRYLSRNLHRGTNEIISKALAAFTATGIDPYSELPEDDWFNDICVDAMERLSGKTKGNNGDVHSPTASVSAQSVSSARSHGSY.

Disordered stretches follow at residues 511 to 532 and 724 to 752; these read QTGQRTDDLRRPLDRQNRNPEQ and TKGNNGDVHSPTASVSAQSVSSARSHGSY. Residues 515 to 532 are compositionally biased toward basic and acidic residues; sequence RTDDLRRPLDRQNRNPEQ. The segment covering 733–752 has biased composition (low complexity); the sequence is SPTASVSAQSVSSARSHGSY.

The protein belongs to the EXO84 family. The exocyst complex is composed of SEC3, SEC5, SEC6, SEC8, SEC10, EXO70A1 and EXO84B. Interacts with SEC6, SEC10, SEC15B and EXO70A1. Interacts with EXO70B1. Binds directly to B1L.

The protein localises to the cytoplasm. It is found in the cytosol. It localises to the perinuclear region. Its subcellular location is the cytoskeleton. The protein resides in the phragmoplast. The protein localises to the secreted. It is found in the cell wall. It localises to the cell membrane. In terms of biological role, component of the exocyst complex involved in the docking of exocytic vesicles with fusion sites on the plasma membrane during regulated or polarized secretion. Involved in polarized cell growth and organ morphogenesis. During cytokinesis, involved in cell plate initiation, cell plate maturation and formation of new primary cell wall. Probable component of an exocyst subcomplex specifically involved in autophagy-related, Golgi-independent membrane traffic to the vacuole. Regulates autophagosome formation and autophagy-related Golgi-independent import into the vacuole. Mediates ABCG36/PEN3 outer-membrane polarity at the periphery of lateral root cap and root epidermal cells. This chain is Exocyst complex component EXO84B, found in Arabidopsis thaliana (Mouse-ear cress).